Here is a 164-residue protein sequence, read N- to C-terminus: Peptide deformylase (164 aa).

Residues Cys87 and His129 each coordinate Fe cation. The active site involves Glu130. Residue His133 coordinates Fe cation.

Belongs to the polypeptide deformylase family. Fe(2+) is required as a cofactor.

The catalysed reaction is N-terminal N-formyl-L-methionyl-[peptide] + H2O = N-terminal L-methionyl-[peptide] + formate. Removes the formyl group from the N-terminal Met of newly synthesized proteins. Requires at least a dipeptide for an efficient rate of reaction. N-terminal L-methionine is a prerequisite for activity but the enzyme has broad specificity at other positions. The sequence is that of Peptide deformylase from Thermotoga petrophila (strain ATCC BAA-488 / DSM 13995 / JCM 10881 / RKU-1).